Here is a 641-residue protein sequence, read N- to C-terminus: ATP-dependent zinc metalloprotease FtsH 2 (641 aa).

The Periplasmic segment spans residues 1–100 (MLAYYVSVNQ…IDVKVIHNFW (100 aa)). Residues 101 to 121 (GQAFLSVLPFLLFILALYFLF) form a helical membrane-spanning segment. Over 122-641 (RQQIRMAGRG…LLPGLEGAPA (520 aa)) the chain is Cytoplasmic. Position 193-200 (193-200 (GPPGTGKT)) interacts with ATP. His415 contributes to the Zn(2+) binding site. Glu416 is an active-site residue. Positions 419 and 491 each coordinate Zn(2+). The segment at 593–641 (KTGKMTNPPSKNSSPVSNGGEASSTKSPARQEETTKDGGLLPGLEGAPA) is disordered. 2 stretches are compositionally biased toward low complexity: residues 599–610 (NPPSKNSSPVSN) and 630–641 (GGLLPGLEGAPA).

In the central section; belongs to the AAA ATPase family. This sequence in the C-terminal section; belongs to the peptidase M41 family. In terms of assembly, homohexamer. Zn(2+) serves as cofactor.

It localises to the cell inner membrane. Functionally, acts as a processive, ATP-dependent zinc metallopeptidase for both cytoplasmic and membrane proteins. Plays a role in the quality control of integral membrane proteins. This chain is ATP-dependent zinc metalloprotease FtsH 2, found in Methylacidiphilum infernorum (isolate V4) (Methylokorus infernorum (strain V4)).